Reading from the N-terminus, the 189-residue chain is Lumazine protein (189 aa).

Lumazine-binding repeat units lie at residues 1–96 and 97–189; these read MFKG…LGKG and ALTG…SNEW.

The cofactor is 6,7-dimethyl-8-(1-D-ribityl)lumazine.

Antenna protein that modulates the color of the bioluminescence emission of the luciferase. In the presence of LumP, luciferase emission is shifted to higher energy values (shorter wavelength). This chain is Lumazine protein (luxL), found in Photobacterium phosphoreum.